We begin with the raw amino-acid sequence, 513 residues long: Glycerol-3-phosphate dehydrogenase (513 aa).

16-44 (DVAVIGGGINGVGIAADAAGRGLSVFLCE) serves as a coordination point for FAD.

This sequence belongs to the FAD-dependent glycerol-3-phosphate dehydrogenase family. FAD is required as a cofactor.

The protein resides in the cytoplasm. The catalysed reaction is a quinone + sn-glycerol 3-phosphate = dihydroxyacetone phosphate + a quinol. The sequence is that of Glycerol-3-phosphate dehydrogenase (glpD) from Pseudomonas tolaasii.